The primary structure comprises 62 residues: Guanine nucleotide-binding protein subunit gamma (62 aa).

The residue at position 59 (Cys59) is a Cysteine methyl ester. The S-geranylgeranyl cysteine moiety is linked to residue Cys59. Positions 60–62 are cleaved as a propeptide — removed in mature form; the sequence is SVL.

It belongs to the G protein gamma family. As to quaternary structure, g proteins are composed of 3 units, alpha, beta and gamma. Interacts with gpb-1 and gpb-2.

Its subcellular location is the cell membrane. Its function is as follows. Guanine nucleotide-binding proteins (G proteins) are involved as a modulator or transducer in various transmembrane signaling systems. The beta and gamma chains are required for the GTPase activity, for replacement of GDP by GTP, and for G protein-effector interaction. The sequence is that of Guanine nucleotide-binding protein subunit gamma (gpc-1) from Caenorhabditis briggsae.